The sequence spans 396 residues: NADH-quinone oxidoreductase subunit D (396 aa).

The protein belongs to the complex I 49 kDa subunit family. NDH-1 is composed of 14 different subunits. Subunits NuoB, C, D, E, F, and G constitute the peripheral sector of the complex.

It localises to the cell inner membrane. The catalysed reaction is a quinone + NADH + 5 H(+)(in) = a quinol + NAD(+) + 4 H(+)(out). In terms of biological role, NDH-1 shuttles electrons from NADH, via FMN and iron-sulfur (Fe-S) centers, to quinones in the respiratory chain. The immediate electron acceptor for the enzyme in this species is believed to be ubiquinone. Couples the redox reaction to proton translocation (for every two electrons transferred, four hydrogen ions are translocated across the cytoplasmic membrane), and thus conserves the redox energy in a proton gradient. The chain is NADH-quinone oxidoreductase subunit D from Brucella abortus (strain S19).